Consider the following 89-residue polypeptide: Myrmicitoxin(1)-Pr2a (89 aa).

The N-terminal stretch at 1–23 is a signal peptide; that stretch reads MEIPKLLYIAVIAIGLSGSLTCA. A propeptide spanning residues 24–61 is cleaved from the precursor; the sequence is TPLANPWADPEAEANPEAKAIAEATAEAIAEALAEPEP. At Asn-88 the chain carries Asparagine amide.

Belongs to the formicidae venom clade 1 family. Expressed by the venom gland.

The protein localises to the secreted. Its function is as follows. Vertebrate-selective toxin that causes pain by targeting voltage-gated sodium channels. This is Myrmicitoxin(1)-Pr2a from Pogonomyrmex rugosus (Desert harvester ant).